A 66-amino-acid chain; its full sequence is Beta-toxin Cbo4 (66 aa).

In terms of domain architecture, LCN-type CS-alpha/beta spans 1-66; that stretch reads KEGYIVDYHT…VWPLPNKRCK (66 aa). Cystine bridges form between C12–C65, C16–C41, C25–C46, and C29–C48. Position 66 is a lysine amide (K66).

The protein belongs to the long (4 C-C) scorpion toxin superfamily. Sodium channel inhibitor family. Beta subfamily. As to expression, expressed by the venom gland.

The protein resides in the secreted. In terms of biological role, beta toxins bind voltage-independently at site-4 of sodium channels and shift the voltage of activation toward more negative potentials thereby affecting sodium channel activation and promoting spontaneous and repetitive firing. Is active on the human voltage-gated sodium channels Nav1.4/SCN4A, Nav1.5/SCN5A and Nav1.6/SCN8A when tested at 200 nM. In vivo, is toxic to mice when intraperitoneally injected. The chain is Beta-toxin Cbo4 from Centruroides bonito (Scorpion).